Reading from the N-terminus, the 186-residue chain is uncharacterized protein (186 aa).

The N-acetyltransferase domain occupies 12–184 (LLKSPVEEDD…HIYKLSKQIR (173 aa)).

The protein belongs to the acetyltransferase family.

It localises to the cytoplasm. It is found in the nucleus. This is an uncharacterized protein from Schizosaccharomyces pombe (strain 972 / ATCC 24843) (Fission yeast).